We begin with the raw amino-acid sequence, 315 residues long: Methionyl-tRNA formyltransferase (315 aa).

Position 113–116 (113–116) interacts with (6S)-5,6,7,8-tetrahydrofolate; the sequence is SLLP.

This sequence belongs to the Fmt family.

The catalysed reaction is L-methionyl-tRNA(fMet) + (6R)-10-formyltetrahydrofolate = N-formyl-L-methionyl-tRNA(fMet) + (6S)-5,6,7,8-tetrahydrofolate + H(+). Its function is as follows. Attaches a formyl group to the free amino group of methionyl-tRNA(fMet). The formyl group appears to play a dual role in the initiator identity of N-formylmethionyl-tRNA by promoting its recognition by IF2 and preventing the misappropriation of this tRNA by the elongation apparatus. This Salmonella enteritidis PT4 (strain P125109) protein is Methionyl-tRNA formyltransferase.